We begin with the raw amino-acid sequence, 455 residues long: Probable circularly permuted 1,3-beta-glucanase TOS1 (455 aa).

An N-terminal signal peptide occupies residues 1–23 (MLQKLSMTALVGLFSSVVSLVNA). The segment at 158 to 221 (TADSTNTVVG…SSSSSSNTNG (64 aa)) is disordered. A compositionally biased stretch (polar residues) spans 172 to 189 (SSYTKDSTVLSSSAQAVE). A compositionally biased stretch (low complexity) spans 190-219 (TSESQSSISSSKTTSSAAAASSSSSSSSNT). N-linked (GlcNAc...) asparagine glycosylation occurs at Asn-236. The ExDxxE motif signature appears at 372–377 (EMDLFE). Asn-417 carries an N-linked (GlcNAc...) asparagine glycan.

It belongs to the PGA52 family.

It is found in the secreted. It localises to the cell wall. The catalysed reaction is Hydrolysis of (1-&gt;3)-beta-D-glucosidic linkages in (1-&gt;3)-beta-D-glucans.. In terms of biological role, probable circularly permuted 1,3-beta-glucanase involved in cell wall modification through beta-1,3-glucan network alterations such as increased branching or remodeling. The polypeptide is Probable circularly permuted 1,3-beta-glucanase TOS1 (Saccharomyces cerevisiae (strain ATCC 204508 / S288c) (Baker's yeast)).